Consider the following 505-residue polypeptide: Histidine ammonia-lyase (505 aa).

The 5-imidazolinone (Ala-Gly) cross-link spans 141–143 (ASG). Ser-142 is modified (2,3-didehydroalanine (Ser)).

It belongs to the PAL/histidase family. In terms of processing, contains an active site 4-methylidene-imidazol-5-one (MIO), which is formed autocatalytically by cyclization and dehydration of residues Ala-Ser-Gly.

It localises to the cytoplasm. The catalysed reaction is L-histidine = trans-urocanate + NH4(+). Its pathway is amino-acid degradation; L-histidine degradation into L-glutamate; N-formimidoyl-L-glutamate from L-histidine: step 1/3. The polypeptide is Histidine ammonia-lyase (Bacillus thuringiensis (strain Al Hakam)).